The chain runs to 59 residues: Large ribosomal subunit protein uL30 (59 aa).

This sequence belongs to the universal ribosomal protein uL30 family. As to quaternary structure, part of the 50S ribosomal subunit.

This chain is Large ribosomal subunit protein uL30, found in Listeria innocua serovar 6a (strain ATCC BAA-680 / CLIP 11262).